The chain runs to 662 residues: Methionine--tRNA ligase (662 aa).

Residues 13-23 (PYTNGPCHLGH) carry the 'HIGH' region motif. Zn(2+) is bound by residues Cys144, Cys147, Cys156, and Cys160. Positions 326-330 (KFSKS) match the 'KMSKS' region motif. ATP is bound at residue Lys329. Residues 564–662 (DFSKVEIKTG…KPVEPGTKIR (99 aa)) enclose the tRNA-binding domain.

This sequence belongs to the class-I aminoacyl-tRNA synthetase family. MetG type 1 subfamily. Homodimer. Zn(2+) serves as cofactor.

Its subcellular location is the cytoplasm. The enzyme catalyses tRNA(Met) + L-methionine + ATP = L-methionyl-tRNA(Met) + AMP + diphosphate. In terms of biological role, is required not only for elongation of protein synthesis but also for the initiation of all mRNA translation through initiator tRNA(fMet) aminoacylation. This Methanoregula boonei (strain DSM 21154 / JCM 14090 / 6A8) protein is Methionine--tRNA ligase.